Here is a 37-residue protein sequence, read N- to C-terminus: Large ribosomal subunit protein bL36c (37 aa).

This sequence belongs to the bacterial ribosomal protein bL36 family.

The protein resides in the plastid. Its subcellular location is the chloroplast. The polypeptide is Large ribosomal subunit protein bL36c (Lepidium virginicum (Virginia pepperweed)).